Here is a 290-residue protein sequence, read N- to C-terminus: Elongation factor Ts (290 aa).

The interval 80 to 83 is involved in Mg(2+) ion dislocation from EF-Tu; that stretch reads TDFV.

The protein belongs to the EF-Ts family.

Its subcellular location is the cytoplasm. Associates with the EF-Tu.GDP complex and induces the exchange of GDP to GTP. It remains bound to the aminoacyl-tRNA.EF-Tu.GTP complex up to the GTP hydrolysis stage on the ribosome. The polypeptide is Elongation factor Ts (Neorickettsia sennetsu (strain ATCC VR-367 / Miyayama) (Ehrlichia sennetsu)).